Reading from the N-terminus, the 456-residue chain is MTOR-associated protein MEAK7 (456 aa).

Gly-2 carries N-myristoyl glycine lipidation. Residues 244 to 412 (SILDVLSVMY…FDKMEVWAVG (169 aa)) form the TLDc domain.

In terms of assembly, interacts (via C-terminal domain) with MTOR and MLST8; the interaction with MTOR increases upon nutrient stimulation.

The protein resides in the membrane. It is found in the cytoplasm. Its subcellular location is the lysosome. Its function is as follows. Activates an alternative mTOR signaling through RPS6KB2 activation and EIF4EBP1 repression to regulate cell proliferation and migration. Recruits MTOR at the lysosome, essential for MTOR signaling at the lysosome. This is MTOR-associated protein MEAK7 from Homo sapiens (Human).